The sequence spans 35 residues: Potassium channel toxin alpha-KTx 6.1 (35 aa).

Cystine bridges form between cysteine 4/cysteine 25, cysteine 10/cysteine 30, cysteine 14/cysteine 32, and cysteine 20/cysteine 35.

This sequence belongs to the short scorpion toxin superfamily. Potassium channel inhibitor family. Alpha-KTx 06 subfamily. As to expression, expressed by the venom gland.

The protein localises to the secreted. Functionally, potently and reversibly inhibits the insect voltage-gated Shaker (Sh) potassium channel (isoform alpha (B)), the mammalian voltage-gated potassium channels Kv1.2/KCNA2 (IC(50)=0.44 nM), and the calcium-activated potassium channel KCa2.3/KCNN3 (Kd=330 nM). Its effect on Kv1.3/KCNA3 is controversial, since this channel is voltage-independently inhibited in PubMed:9464266, but is not affected in PubMed:10931199. Furthermore, this toxin competes with apamin (a small conductance calcium-activated potassium channel inhibitor) for binding to rat brain synaptosomes. The polypeptide is Potassium channel toxin alpha-KTx 6.1 (Pandinus imperator (Emperor scorpion)).